The chain runs to 567 residues: PHD finger protein 1 (567 aa).

The tract at residues 1–31 is disordered; that stretch reads MAQPPRLSRSGASSLWDPASPAPTSGPRPRL. Residues 29–86 enclose the Tudor domain; it reads PRLWEGQDVLARWTDGLLYLGTIKKVDSAREVCLVQFEDDSQFLVLWKDISPAALPGE. PHD-type zinc fingers lie at residues 87–142 and 186–240; these read ELLC…CVFA and QSYC…CRGG. Disordered regions lie at residues 333-441 and 455-537; these read ARMP…TDAR and HPSA…GYLS. Phosphoserine is present on G360. Residues 371 to 386 are compositionally biased toward basic and acidic residues; sequence PEPEPLRRRQKGKVEE. S420 carries the phosphoserine modification. Composition is skewed to low complexity over residues 423–433, 456–470, and 488–510; these read PNQSYQGSSGY, PSAS…SGPP, and SAPH…LPRR. The segment covering 524 to 534 has biased composition (gly residues); that stretch reads GTGGGVRGGVG.

This sequence belongs to the Polycomblike family. In terms of assembly, interacts with CHMP1. Associated component of the PRC2 complex. Interacts with p53/TP53. Highest levels in heart, skeletal muscle, and pancreas, lower levels in brain, placenta, lung, liver and kidney.

It is found in the nucleus. Its subcellular location is the cytoplasm. The protein resides in the cytoskeleton. The protein localises to the microtubule organizing center. It localises to the centrosome. Its function is as follows. Polycomb group (PcG) that specifically binds histone H3 trimethylated at 'Lys-36' (H3K36me3) and recruits the PRC2 complex. Involved in DNA damage response and is recruited at double-strand breaks (DSBs). Acts by binding to H3K36me3, a mark for transcriptional activation, and recruiting the PRC2 complex: it is however unclear whether recruitment of the PRC2 complex to H3K36me3 leads to enhance or inhibit H3K27me3 methylation mediated by the PRC2 complex. According to some reports, PRC2 recruitment by PHF1 promotes H3K27me3 and subsequent gene silencing by inducing spreading of PRC2 and H3K27me3 into H3K36me3 loci. According to another report, PHF1 recruits the PRC2 complex at double-strand breaks (DSBs) and inhibits the activity of PRC2. Regulates p53/TP53 stability and prolonges its turnover: may act by specifically binding to a methylated from of p53/TP53. The polypeptide is PHD finger protein 1 (PHF1) (Homo sapiens (Human)).